Here is a 326-residue protein sequence, read N- to C-terminus: tRNA U34 carboxymethyltransferase (326 aa).

Carboxy-S-adenosyl-L-methionine-binding residues include lysine 91, tryptophan 105, lysine 110, glycine 130, methionine 196, tyrosine 200, and arginine 315.

The protein belongs to the class I-like SAM-binding methyltransferase superfamily. CmoB family. As to quaternary structure, homotetramer.

It carries out the reaction carboxy-S-adenosyl-L-methionine + 5-hydroxyuridine(34) in tRNA = 5-carboxymethoxyuridine(34) in tRNA + S-adenosyl-L-homocysteine + H(+). Its function is as follows. Catalyzes carboxymethyl transfer from carboxy-S-adenosyl-L-methionine (Cx-SAM) to 5-hydroxyuridine (ho5U) to form 5-carboxymethoxyuridine (cmo5U) at position 34 in tRNAs. In Tolumonas auensis (strain DSM 9187 / NBRC 110442 / TA 4), this protein is tRNA U34 carboxymethyltransferase.